Reading from the N-terminus, the 464-residue chain is Myrosinase 1 (464 aa).

Gln-19 is a binding site for substrate. Zn(2+) contacts are provided by His-39 and Asp-52. Substrate is bound by residues His-122 and Asn-166. Catalysis depends on Glu-167, which acts as the Nucleophile. Glu-374 (proton donor) is an active-site residue. N-linked (GlcNAc...) asparagine glycosylation occurs at Asn-397.

Homodimer. As to expression, expressed in the skeletal muscle tissues surrounding the head, abdomen and thorax. Not expressed in flight muscles (at protein level).

It catalyses the reaction a thioglucoside + H2O = a sugar + a thiol.. Hydrolyzes glucosinolates to a labile aglycone. This rapidly undergoes spontaneous rearrangement, eliminating sulfur to yield a number of toxic metabolites. Thereby developing a chemical defense system that exploits and mimics the host plant. This chain is Myrosinase 1, found in Brevicoryne brassicae (Mealy cabbage aphid).